A 1233-amino-acid chain; its full sequence is Structural maintenance of chromosomes protein 1A (1233 aa).

Position 32-39 (32-39 (GPNGSGKS)) interacts with ATP. Coiled coils occupy residues 104-124 (EYKINNKVVQLHEYSEELEKL) and 163-503 (ELAQ…KAEI). Basic and acidic residues predominate over residues 284-293 (IKEKDSELNQ). Disordered stretches follow at residues 284 to 307 (IKEKDSELNQKRPQYIKAKENTSH) and 350 to 369 (FEERMEEESQSQGRDLTLEE). Residues serine 358 and serine 360 each carry the phosphoserine modification. Residues 515–629 (VYGRLIDLCQ…DNVEDARRIA (115 aa)) form the SMC hinge domain. N6-acetyllysine is present on residues lysine 648 and lysine 713. The stretch at 660-935 (KAKARRWDEK…RHNLLQACKM (276 aa)) forms a coiled coil. The interval 946-969 (TMDDISQEEGGSQGEESVSGSQRT) is disordered. The span at 953 to 967 (EEGGSQGEESVSGSQ) shows a compositional bias: low complexity. A phosphoserine mark is found at serine 957, serine 962, serine 966, and serine 970. A coiled-coil region spans residues 991–1068 (KDAQAEEEIK…FEQIKKERFD (78 aa)). At lysine 1037 the chain carries N6-acetyllysine.

The protein belongs to the SMC family. SMC1 subfamily. Forms a heterodimer with SMC3 in cohesin complexes. Cohesin complexes are composed of the SMC1 (SMC1A or meiosis-specific SMC1B) and SMC3 heterodimer attached via their SMC hinge domain, RAD21 which link them, and one STAG protein (STAG1, STAG2 or meiosis-specific STAG3), which interacts with RAD21. In germ cell cohesin complexes, SMC1A is mutually exclusive with SMC1B. Found in a complex with CDCA5, SMC3 and RAD21, PDS5A/SCC-112 and PDS5B/APRIN. Interacts with STAG3, NDC80, BRAC1, BRAT1 and RPGR. Found in a complex containing POLE and SMC3. The cohesin complex interacts with the cohesin loading complex subunits NIPBL/Scc2 (via HEAT repeats) and MAU2/Scc4. NIPBL directly contacts all members of the complex, RAD21, SMC1A/B, SMC3 and STAG1. Interacts with SYCP2. Post-translationally, phosphorylated upon ionizing radiation or DNA methylation. Phosphorylation of Ser-957 and Ser-966 activates it and is required for S-phase checkpoint activation. Ubiquitinated by the DCX(DCAF15) complex, leading to its degradation.

The protein resides in the nucleus. The protein localises to the chromosome. In terms of biological role, involved in chromosome cohesion during cell cycle and in DNA repair. Central component of cohesin complex. The cohesin complex is required for the cohesion of sister chromatids after DNA replication. The cohesin complex apparently forms a large proteinaceous ring within which sister chromatids can be trapped. At anaphase, the complex is cleaved and dissociates from chromatin, allowing sister chromatids to segregate. The cohesin complex may also play a role in spindle pole assembly during mitosis. Involved in DNA repair via its interaction with BRCA1 and its related phosphorylation by ATM, or via its phosphorylation by ATR. Works as a downstream effector both in the ATM/NBS1 branch and in the ATR/MSH2 branch of S-phase checkpoint. This Rattus norvegicus (Rat) protein is Structural maintenance of chromosomes protein 1A (Smc1a).